A 354-amino-acid polypeptide reads, in one-letter code: MSTSFPELDLENFEYDDSAEACYLGDIVAFGTIFLSVFYALVFTFGLVGNLLVVLALTNSRKPKSITDIYLLNLALSDLLFVATLPFWTHYLISHEGLHNAMCKLTTAFFFIGFFGGIFFITVISIDRYLAIVLAANSMNNRTVQHGVTISLGVWAAAILVASPQFMFTKRKDNECLGDYPEVLQEMWPVLRNSEVNILGFALPLLIMSFCYFRIIQTLFSCKNRKKARAVRLILLVVFAFFLFWTPYNIMIFLETLKFYNFFPSCDMKRDLRLALSVTETVAFSHCCLNPFIYAFAGEKFRRYLGHLYRKCLAVLCGHPVHTGFSPESQRSRQDSILSSFTHYTSEGDGSLLL.

Residues 1 to 32 are Extracellular-facing; it reads MSTSFPELDLENFEYDDSAEACYLGDIVAFGT. Residues 33 to 60 traverse the membrane as a helical segment; sequence IFLSVFYALVFTFGLVGNLLVVLALTNS. At 61–70 the chain is on the cytoplasmic side; that stretch reads RKPKSITDIY. Residues 71–91 traverse the membrane as a helical segment; that stretch reads LLNLALSDLLFVATLPFWTHY. Topologically, residues 92 to 104 are extracellular; that stretch reads LISHEGLHNAMCK. Cysteine 103 and cysteine 176 are joined by a disulfide. Residues 105-126 form a helical membrane-spanning segment; it reads LTTAFFFIGFFGGIFFITVISI. The Cytoplasmic portion of the chain corresponds to 127-143; the sequence is DRYLAIVLAANSMNNRT. Residues 144–168 traverse the membrane as a helical segment; that stretch reads VQHGVTISLGVWAAAILVASPQFMF. At 169-196 the chain is on the extracellular side; it reads TKRKDNECLGDYPEVLQEMWPVLRNSEV. A helical membrane pass occupies residues 197–216; sequence NILGFALPLLIMSFCYFRII. Over 217-232 the chain is Cytoplasmic; sequence QTLFSCKNRKKARAVR. The helical transmembrane segment at 233-257 threads the bilayer; it reads LILLVVFAFFLFWTPYNIMIFLETL. At 258–274 the chain is on the extracellular side; it reads KFYNFFPSCDMKRDLRL. Residues 275 to 298 traverse the membrane as a helical segment; sequence ALSVTETVAFSHCCLNPFIYAFAG. Topologically, residues 299 to 354 are cytoplasmic; that stretch reads EKFRRYLGHLYRKCLAVLCGHPVHTGFSPESQRSRQDSILSSFTHYTSEGDGSLLL. A Phosphothreonine modification is found at threonine 345.

The protein belongs to the G-protein coupled receptor 1 family. As to quaternary structure, found in a ternary complex with CX3CL1 and ITGAV:ITGB3 or ITGA4:ITGB1. In terms of processing, this protein is not N-glycosylated which is unusual for G-protein-coupled receptors. Specifically expressed in subsets of leukocytes: expressed in monocytes, subsets of T-cells and natural killer (NK) cells in the circulation, dendritic cells, as well as in microglia in the central nervous system (CNS). Expression level subdivides blood monocytes into two major functional subsets; CD14(+)CD16(-)-CX3CR1(low) inflammatory monocytes and CD14(low)CD16(+)CX3CR1(high) homeostatic monocytes. Expressed in myeloid-derived mucosal dendritic cells, which populate the entire lamina propria of the small intestine.

It localises to the cell membrane. Its function is as follows. Receptor for the C-X3-C chemokine fractalkine (CX3CL1) present on many early leukocyte cells; CX3CR1-CX3CL1 signaling exerts distinct functions in different tissue compartments, such as immune response, inflammation, cell adhesion and chemotaxis. CX3CR1-CX3CL1 signaling mediates cell migratory functions. Responsible for the recruitment of natural killer (NK) cells to inflamed tissues. Acts as a regulator of inflammation process leading to atherogenesis by mediating macrophage and monocyte recruitment to inflamed atherosclerotic plaques, promoting cell survival. Involved in airway inflammation by promoting interleukin 2-producing T helper (Th2) cell survival in inflamed lung. Involved in the migration of circulating monocytes to non-inflamed tissues, where they differentiate into macrophages and dendritic cells. Acts as a negative regulator of angiogenesis, probably by promoting macrophage chemotaxis. Plays a key role in brain microglia by regulating inflammatory response in the central nervous system (CNS) and regulating synapse maturation. Required to restrain the microglial inflammatory response in the CNS and the resulting parenchymal damage in response to pathological stimuli. Involved in brain development by participating in synaptic pruning, a natural process during which brain microglia eliminates extra synapses during postnatal development. Synaptic pruning by microglia is required to promote the maturation of circuit connectivity during brain development. Acts as an important regulator of the gut microbiota by controlling immunity to intestinal bacteria and fungi. Expressed in lamina propria dendritic cells in the small intestine, which form transepithelial dendrites capable of taking up bacteria in order to provide defense against pathogenic bacteria. Required to initiate innate and adaptive immune responses against dissemination of commensal fungi (mycobiota) component of the gut: expressed in mononuclear phagocytes (MNPs) and acts by promoting induction of antifungal IgG antibodies response to confer protection against disseminated C.albicans or C.auris infection. Also acts as a receptor for C-C motif chemokine CCL26, inducing cell chemotaxis. The chain is CX3C chemokine receptor 1 from Mus musculus (Mouse).